The following is a 357-amino-acid chain: Protein RecA (357 aa).

Residue 71-78 (GPESSGKT) coordinates ATP.

It belongs to the RecA family.

The protein localises to the cytoplasm. Its function is as follows. Can catalyze the hydrolysis of ATP in the presence of single-stranded DNA, the ATP-dependent uptake of single-stranded DNA by duplex DNA, and the ATP-dependent hybridization of homologous single-stranded DNAs. It interacts with LexA causing its activation and leading to its autocatalytic cleavage. The protein is Protein RecA of Ehrlichia ruminantium (strain Gardel).